The primary structure comprises 542 residues: MAAKEIKFSTEAREKMLRGVDILANAVKATLGPKGRNVVIERSFGAPRITKDGVSVAKEIELEDKFENMGAQMVREVASKTSDVAGDGTTTATVLAQAIVKEGAKAVTSGMNPMDLKRGIDLAVGAIVAELKANARKISNNSEIAQVGTISANGDAEIGRFLAEAMERVGNDGVITVEEAKTAETELEVVEGMQFDRGYLSPYFVTNADKMRVEFEDPYILIHEKKLSNLQSMLPVLEAVVQSSKPLLIIAEDVEGEALATLVVNKLRGGLKIAAVKAPGFGDRRKAMLEDIAILTAGTVISEDLGIKLESVTLDMLGRAKKVSIEKENTTIVDGSGAKSDIEGRVAQIRAQIEETTSDYDREKLQERLAKLAGGVAVIRVGGSTEVEVKEKKDRVDDALHATRAAVEEGILPGGGVALLRAVKALDNVETANGDQRVGVDIVRRAVEAPARQIAENAGAEGSVIVGKLREKSEFSYGWNAQTGEYGDLYAQGVIDPAKVVRTALQDAASIAGLLVTTEAMIAEKPRKDAPPPMPAGHGMDF.

Residues 30 to 33 (TLGP), K51, 87 to 91 (DGTTT), G415, and D496 each bind ATP.

It belongs to the chaperonin (HSP60) family. Forms a cylinder of 14 subunits composed of two heptameric rings stacked back-to-back. Interacts with the co-chaperonin GroES.

Its subcellular location is the cytoplasm. The enzyme catalyses ATP + H2O + a folded polypeptide = ADP + phosphate + an unfolded polypeptide.. Functionally, together with its co-chaperonin GroES, plays an essential role in assisting protein folding. The GroEL-GroES system forms a nano-cage that allows encapsulation of the non-native substrate proteins and provides a physical environment optimized to promote and accelerate protein folding. The sequence is that of Chaperonin GroEL 3 from Rhizobium johnstonii (strain DSM 114642 / LMG 32736 / 3841) (Rhizobium leguminosarum bv. viciae).